The chain runs to 461 residues: uncharacterized protein (461 aa).

Residues 1-19 (MEKCSHESGRHSAENDGKY) are compositionally biased toward basic and acidic residues. Positions 1–21 (MEKCSHESGRHSAENDGKYDI) are disordered.

The protein belongs to the CapA family.

Could be involved in the biosynthesis of a cell wall component. This is an uncharacterized protein from Sinorhizobium fredii (strain NBRC 101917 / NGR234).